The primary structure comprises 1241 residues: Nephrin (1241 aa).

Residues methionine 1–alanine 22 form the signal peptide. The Extracellular portion of the chain corresponds to glutamine 23–serine 1055. Ig-like C2-type domains follow at residues proline 27–serine 130, glutamate 143–valine 234, proline 242–threonine 333, proline 340–isoleucine 434, proline 440–alanine 540, and proline 544–serine 635. A glycan (N-linked (GlcNAc...) asparagine) is linked at asparagine 40. Cystine bridges form between cysteine 53/cysteine 111, cysteine 160/cysteine 217, and cysteine 265/cysteine 317. N-linked (GlcNAc...) asparagine glycans are attached at residues asparagine 356 and asparagine 401. Cysteine 361 and cysteine 417 are oxidised to a cystine. A Phosphoserine modification is found at serine 432. Cysteine 465 and cysteine 528 are oxidised to a cystine. 6 N-linked (GlcNAc...) asparagine glycosylation sites follow: asparagine 547, asparagine 553, asparagine 564, asparagine 577, asparagine 680, and asparagine 708. A disulfide bridge links cysteine 567 with cysteine 623. 2 consecutive Ig-like C2-type domains span residues proline 740 to leucine 832 and proline 838 to serine 939. 2 disulfide bridges follow: cysteine 761/cysteine 816 and cysteine 863/cysteine 920. Asparagine 908 carries an N-linked (GlcNAc...) asparagine glycan. The Fibronectin type-III domain maps to proline 943–leucine 1038. A disordered region spans residues alanine 1025–proline 1057. The chain crosses the membrane as a helical span at residues glycine 1056–serine 1076. Residues asparagine 1077 to valine 1241 lie on the Cytoplasmic side of the membrane. Serine 1098 bears the Phosphoserine mark. Residues glutamate 1099–tyrosine 1114 are compositionally biased toward basic and acidic residues. Positions glutamate 1099–proline 1137 are disordered. Threonine 1101 is subject to Phosphothreonine. Position 1105 is a phosphoserine (serine 1105). The tract at residues arginine 1160–valine 1241 is binds to NPHS2. Tyrosine 1193 carries the post-translational modification Phosphotyrosine; by FYN.

It belongs to the immunoglobulin superfamily. In terms of assembly, interacts with CD2AP (via C-terminal domain). Interacts with MAGI1 (via PDZ 2 and 3 domains) forming a tripartite complex with IGSF5/JAM4. Interacts with DDN; the interaction is direct. Self-associates (via the Ig-like domains). Also interacts (via the Ig-like domains) with KIRREL1/NEPH1 and KIRREL2; the interaction with KIRREL1 is dependent on KIRREL1 glycosylation. Interacts with KIRREL3. Forms a complex with ACTN4, CASK, IQGAP1, MAGI2, SPTAN1 and SPTBN1. Interacts with NPHS2. Interacts with phosphatidylinositol 3-kinase regulatory subunit PIK3R1; the interaction is reduced by high glucose levels. In terms of processing, phosphorylated at Tyr-1193 by FYN, leading to the recruitment and activation of phospholipase C-gamma-1/PLCG1. Tyrosine phosphorylation is reduced by high glucose levels. Dephosphorylated by tensin TNS2 which leads to reduced binding of NPHN1 to PIK3R1. In terms of tissue distribution, specifically expressed in podocytes of kidney glomeruli.

The protein localises to the cell membrane. In terms of biological role, seems to play a role in the development or function of the kidney glomerular filtration barrier. Regulates glomerular vascular permeability. May anchor the podocyte slit diaphragm to the actin cytoskeleton. Plays a role in skeletal muscle formation through regulation of myoblast fusion. This Homo sapiens (Human) protein is Nephrin (NPHS1).